We begin with the raw amino-acid sequence, 71 residues long: Sec-independent protein translocase protein TatA (71 aa).

A helical membrane pass occupies residues 1-21 (MGSFSMWHWLIVLAIVLLLFG). Residues 40–71 (KKGMSDDDTAPDGTPKPADQSKTVDHRADDHK) form a disordered region. The span at 61–71 (KTVDHRADDHK) shows a compositional bias: basic and acidic residues.

This sequence belongs to the TatA/E family. In terms of assembly, the Tat system comprises two distinct complexes: a TatABC complex, containing multiple copies of TatA, TatB and TatC subunits, and a separate TatA complex, containing only TatA subunits. Substrates initially bind to the TatABC complex, which probably triggers association of the separate TatA complex to form the active translocon.

The protein localises to the cell inner membrane. Part of the twin-arginine translocation (Tat) system that transports large folded proteins containing a characteristic twin-arginine motif in their signal peptide across membranes. TatA could form the protein-conducting channel of the Tat system. In Allorhizobium ampelinum (strain ATCC BAA-846 / DSM 112012 / S4) (Agrobacterium vitis (strain S4)), this protein is Sec-independent protein translocase protein TatA.